A 391-amino-acid chain; its full sequence is Homocysteine-responsive endoplasmic reticulum-resident ubiquitin-like domain member 1 protein (391 aa).

At methionine 1 the chain carries N-acetylmethionine. Residues 1–263 lie on the Cytoplasmic side of the membrane; that stretch reads MESETEPEPV…VEEDDEINRD (263 aa). The region spanning 10-72 is the Ubiquitin-like domain; that stretch reads VTLLVKSPNQ…LLDHQCLRDL (63 aa). The tract at residues 100–126 is disordered; sequence KVAESTEEPAGSNRGQYPEDSSSDGLR. Residues 112-124 show a composition bias toward polar residues; sequence NRGQYPEDSSSDG. The interaction with UBQLN1 stretch occupies residues 115-200; it reads QYPEDSSSDG…ASGAFVPPPS (86 aa). Serine 135 bears the Phosphoserine mark. An interaction with SYVN1 region spans residues 170–190; that stretch reads LSWFQQIYARQYYMQYLAATA. The helical transmembrane segment at 264–284 threads the bilayer; that stretch reads WLDWTYSAATFSVFLSILYFY. The Lumenal segment spans residues 285–289; sequence SSLSR. The chain crosses the membrane as a helical span at residues 290-310; that stretch reads FLMVMGATVVMYLHHVGWFPF. At 311 to 391 the chain is on the cytoplasmic side; it reads RPRPVQNFPN…LPEGPPAIAN (81 aa). The interval 318–359 is disordered; the sequence is FPNDGPPPDVVNQDPNNNLQEGTDPETEDPNHLPPDRDVLDG. The span at 346–357 shows a compositional bias: basic and acidic residues; that stretch reads DPNHLPPDRDVL.

Interacts with PSEN1 and PSEN2. Interacts with UBXN6. Interacts with UBQLN1, UBQLN2 and UBQLN4. Component of the HRD1 complex, which comprises at least SYNV1/HRD1, FAM8A1, HERPUD1/HERP, OS9, SEL1L and UBE2J1. FAM8A1 binding to SYNV1 may promote recruitment of HERPUD1 to the HRD1 complex. As to expression, widely expressed; in the brain, expression seems to be restricted to neurons and vascular smooth muscle cells. Present in activated microglia in senile plaques in the brain of patients with Alzheimer disease.

Its subcellular location is the endoplasmic reticulum membrane. Its function is as follows. Component of the endoplasmic reticulum quality control (ERQC) system also called ER-associated degradation (ERAD) involved in ubiquitin-dependent degradation of misfolded endoplasmic reticulum proteins. Could enhance presenilin-mediated amyloid-beta protein 40 generation. Binds to ubiquilins and this interaction is required for efficient degradation of CD3D via the ERAD pathway. The chain is Homocysteine-responsive endoplasmic reticulum-resident ubiquitin-like domain member 1 protein (HERPUD1) from Homo sapiens (Human).